We begin with the raw amino-acid sequence, 152 residues long: UPF0178 protein YaiI (152 aa).

Belongs to the UPF0178 family.

The sequence is that of UPF0178 protein YaiI from Escherichia coli O81 (strain ED1a).